Consider the following 579-residue polypeptide: UPF0329 protein ECU06_1620 (579 aa).

Disordered regions lie at residues 325–360 (EEKA…GEEA) and 370–389 (ARRK…KIHK). Basic residues predominate over residues 329–338 (KGRKDGKKKS). Positions 345–360 (KEEESETEEVEAGEEA) are enriched in acidic residues.

The protein belongs to the UPF0329 family.

The sequence is that of UPF0329 protein ECU06_1620 from Encephalitozoon cuniculi (strain GB-M1) (Microsporidian parasite).